Consider the following 637-residue polypeptide: MSQAAARLMERILQPVPEPFALLYRPESSGPGLLNVLIGEMSQPQVLADIDLPAPSIGAPRLDVLTLIPYCQIAERGFAAVDDQSPLLAMNITEQQTISIEQMLALLPNVPIQLNNERFDLSDASYAEIVSQVIANEIGSGEGANFVIKRTFLAEISEYQPASALSFFRHLLEREKGVYWTFIIHTGSRTFVGASPERHISVKDGLAVMNPISGTYRYPPAGPSLTEVMDFLADRKEADELYMVVDEELKMMARICEDGGHVLGPYLKEMTHLAHTEYFIEGRTRRDVREILHETLFAPTVTGSPLESACRVIERYEPQGRAYYSGMAALIGSDGKGGRSLDSAILIRTADIDNCGQVRISVGSTIVRHSEPLTEAAESRAKAAGLIAALKNQAASRFGDHLQVRAALASRNAYVSDFWLMNSQQRQQTQSDFSGRQVLIVDAEDTFTSMIAKQLRALGLVVTVRSFSDEYSFDGYDLVIMGPGPGNPSDVQLPKIDHLHVAIRSLLNQQRPFLAVCLSHQVLSLCLGLELQRKAIPNQGVQKQIDLFGNAERVGFYNTFAARSSSDRLDIDGIGTVEISRDSETGEVHALRGPAFASMQFHAESLLTQEGPRIIADLLRHALIHTPVDSSVSAAGR.

Residues 1 to 434 form an anthranilate synthase component I region; the sequence is MSQAAARLME…QRQQTQSDFS (434 aa). The Glutamine amidotransferase type-1 domain maps to 437-628; it reads QVLIVDAEDT…LRHALIHTPV (192 aa). Catalysis depends on for GATase activity residues Cys517, His602, and Glu604.

It carries out the reaction chorismate + L-glutamine = anthranilate + pyruvate + L-glutamate + H(+). It functions in the pathway antibiotic biosynthesis; phenazine biosynthesis. In terms of biological role, involved in the biosynthesis of the antibiotic, phenazine, a nitrogen-containing heterocyclic molecule having important roles in virulence, competition and biological control. The sequence is that of Anthranilate synthase, phenazine specific (phzE) from Pseudomonas fluorescens.